The primary structure comprises 26 residues: GTP-binding protein Rheb (26 aa).

The GTP site is built by Ser1, Ser2, Val13, Tyr16, and Thr19. Ser1 serves as a coordination point for Mg(2+). The short motif at 16-24 (YDPTIENTF) is the Effector region element. Thr19 contributes to the Mg(2+) binding site.

Belongs to the small GTPase superfamily. Rheb family.

It carries out the reaction GTP + H2O = GDP + phosphate + H(+). Binds GTP and exhibits intrinsic GTPase activity. This Crocodylus siamensis (Siamese crocodile) protein is GTP-binding protein Rheb.